The sequence spans 259 residues: UPF0758 protein Bphyt_3148 (259 aa).

Residues 137 to 259 (LLNSPEAVEN…VYSFARAGWP (123 aa)) enclose the MPN domain. Residues His208, His210, and Asp221 each contribute to the Zn(2+) site. The JAMM motif motif lies at 208–221 (HNHPSGAVQPSASD).

Belongs to the UPF0758 family.

This chain is UPF0758 protein Bphyt_3148, found in Paraburkholderia phytofirmans (strain DSM 17436 / LMG 22146 / PsJN) (Burkholderia phytofirmans).